The chain runs to 450 residues: Neuronal acetylcholine receptor subunit alpha-10 (450 aa).

The signal sequence occupies residues 1 to 24; sequence MGLRSHHLSLGLLLLFLLPAECLG. Residues 25–237 lie on the Extracellular side of the membrane; the sequence is AEGRLALKLF…FTLLLRRRAA (213 aa). Asn-40 and Asn-56 each carry an N-linked (GlcNAc...) asparagine glycan. 2 disulfides stabilise this stretch: Cys-154–Cys-168 and Cys-218–Cys-219. Transmembrane regions (helical) follow at residues 238-258, 268-288, and 302-322; these read AYVC…PLAF, VSLG…LAES, and YMAT…IMNL. Residues 323 to 428 lie on the Cytoplasmic side of the membrane; that stretch reads HYCGPSVRPV…WKRLARVMDR (106 aa). The disordered stretch occupies residues 355 to 380; the sequence is EPCGQSRPPELSPSPQSPEGGAGPPA. The chain crosses the membrane as a helical span at residues 429–449; it reads FFLAIFFSMALVMSLLVLVQA.

It belongs to the ligand-gated ion channel (TC 1.A.9) family. Acetylcholine receptor (TC 1.A.9.1) subfamily. Alpha-10/CHRNA10 sub-subfamily. As to quaternary structure, forms homo- or heterooligomeric channels in conjunction with CHRNA10. The native outer hair cell receptor may be composed of CHRNA9:CHRNA10 heterooligomers. Found in the stoichiometric form (CHRNA9)2:(CHRNA10)3. As to expression, expressed in inner-ear tissue, tonsil, immortalized B-cells, cultured T-cells and peripheral blood lymphocytes.

It is found in the synaptic cell membrane. The protein localises to the cell membrane. It carries out the reaction Ca(2+)(in) = Ca(2+)(out). The enzyme catalyses K(+)(in) = K(+)(out). The catalysed reaction is Na(+)(in) = Na(+)(out). It catalyses the reaction Mg(2+)(in) = Mg(2+)(out). Its activity is regulated as follows. Activated by a myriad of ligands such as acetylcholine. AChR activity is inhibited by the antagonists alpha-conotoxins RgIA and GeXXA, small disulfide-constrained peptides from cone snails. In terms of biological role, component of neuronal acetylcholine receptors (nAChRs) that function as pentameric, ligand-gated cation channels with high calcium permeability. nAChRs are excitatory neurotrasnmitter receptors formed by a collection of nAChR subunits. Each nAchR subunit confers differential attributes to channel properties, including activation, deactivation and desensitization kinetics, pH sensitivity, cation permeability, and binding to allosteric modulators. Forms heteropentamers with CHRNA9. Expressed in the inner ear, in sympathetic neurons and in other non-neuronal cells, such as skin keratinocytes and lymphocytes. nAChR formed by CHRNA9:CHRNA10 is involved in modulation of auditory stimuli. The channel is permeable to a range of divalent cations including calcium, the influx of which may activate a potassium current which hyperpolarizes the cell membrane. In the ear, mediates synaptic transmission between efferent olivocochlear fibers and hair cells of the cochlea, this may lead to a reduction in basilar membrane motion, altering the activity of auditory nerve fibers and reducing the range of dynamic hearing. This may protect against acoustic trauma. May also regulate keratinocyte adhesion. The polypeptide is Neuronal acetylcholine receptor subunit alpha-10 (Homo sapiens (Human)).